Consider the following 192-residue polypeptide: Shikimate kinase (192 aa).

15-20 is an ATP binding site; sequence GAGKTT. Thr19 serves as a coordination point for Mg(2+). Residues Asp37, Arg61, and Gly83 each coordinate substrate. Residue Arg121 coordinates ATP. Arg140 lines the substrate pocket.

The protein belongs to the shikimate kinase family. As to quaternary structure, monomer. It depends on Mg(2+) as a cofactor.

It is found in the cytoplasm. The catalysed reaction is shikimate + ATP = 3-phosphoshikimate + ADP + H(+). The protein operates within metabolic intermediate biosynthesis; chorismate biosynthesis; chorismate from D-erythrose 4-phosphate and phosphoenolpyruvate: step 5/7. In terms of biological role, catalyzes the specific phosphorylation of the 3-hydroxyl group of shikimic acid using ATP as a cosubstrate. In Cupriavidus pinatubonensis (strain JMP 134 / LMG 1197) (Cupriavidus necator (strain JMP 134)), this protein is Shikimate kinase.